Reading from the N-terminus, the 87-residue chain is UPF0335 protein RL4065 (87 aa).

This sequence belongs to the UPF0335 family.

The chain is UPF0335 protein RL4065 from Rhizobium johnstonii (strain DSM 114642 / LMG 32736 / 3841) (Rhizobium leguminosarum bv. viciae).